The primary structure comprises 1067 residues: Mediator of RNA polymerase II transcription subunit 5 (1067 aa).

It belongs to the Mediator complex subunit 5 family. Component of the Mediator complex.

It is found in the nucleus. In terms of biological role, component of the Mediator complex, a coactivator involved in the regulated transcription of nearly all RNA polymerase II-dependent genes. Mediator functions as a bridge to convey information from gene-specific regulatory proteins to the basal RNA polymerase II transcription machinery. Mediator is recruited to promoters by direct interactions with regulatory proteins and serves as a scaffold for the assembly of a functional preinitiation complex with RNA polymerase II and the general transcription factors. This is Mediator of RNA polymerase II transcription subunit 5 (NUT1) from Kluyveromyces lactis (strain ATCC 8585 / CBS 2359 / DSM 70799 / NBRC 1267 / NRRL Y-1140 / WM37) (Yeast).